We begin with the raw amino-acid sequence, 497 residues long: Di-/tripeptide transporter (497 aa).

Residues 1-36 (MQNLNKTEKTFFGQPRGLLTLFQTEFWERFSYYGMR) lie on the Cytoplasmic side of the membrane. The chain crosses the membrane as a helical span at residues 37 to 55 (AILVYYLYALTTADNAGLG). Over 56-64 (LPKAQAMAI) the chain is Extracellular. A helical transmembrane segment spans residues 65 to 83 (VSIYGALVYLSTIVGGWVA). The Cytoplasmic portion of the chain corresponds to 84–92 (DRLLGASRT). A helical transmembrane segment spans residues 93–111 (IFLGGILITLGHIALATPF). Residues 112 to 115 (GLSS) are Extracellular-facing. Residues 116–134 (LFVALFLIILGTGMLKPNI) traverse the membrane as a helical segment. Residues 135 to 154 (SNMVGHLYSKDDSRRDTGFN) are Cytoplasmic-facing. A helical transmembrane segment spans residues 155-173 (IFVVGINMGSLIAPLIVGT). The Extracellular segment spans residues 174–181 (VGQGVNYH). Residues 182-200 (LGFSLAAIGMIFALFAYWY) form a helical membrane-spanning segment. The Cytoplasmic segment spans residues 201 to 224 (GRLRHFPEIGREPSNPMDSKARRN). Residues 225–243 (FLITLTIVVIVAIIGFFLL) form a helical membrane-spanning segment. Topologically, residues 244-254 (YQASPANFINN) are extracellular. A helical transmembrane segment spans residues 255-273 (FINVLSIIGIVVPIIYFVM). The Cytoplasmic portion of the chain corresponds to 274-293 (MFTSKKVESDERRKLTAYIP). Residues 294–312 (LFLSAIVFWAIEEQSSTII) traverse the membrane as a helical segment. Residues 313–335 (AVWGESRSNLDPTWFGITFHIDP) lie on the Extracellular side of the membrane. A helical membrane pass occupies residues 336–354 (SWYQLLNPLFIVLLSPIFV). Over 355-372 (RLWNKLGERQPSTIVKFG) the chain is Cytoplasmic. Residues 373 to 391 (LGLMLTGISYLIMTLPGLL) form a helical membrane-spanning segment. Residues 392–425 (NGTSGRASALWLVLMFAVQMAGELLVSPVGLSVS) are Extracellular-facing. A helical transmembrane segment spans residues 426 to 444 (TKLAPVAFQSQMMAMWFLA). Residues 445–497 (DSTSQAINAQITPLFKAATEVHFFAITGIIGIIVGIILLIVKKPILKLMGDVR) lie on the Cytoplasmic side of the membrane.

The protein belongs to the major facilitator superfamily. Proton-dependent oligopeptide transporter (POT/PTR) (TC 2.A.17) family.

The protein localises to the cell membrane. Functionally, proton-dependent uptake of di- or tri-peptides. The protein is Di-/tripeptide transporter (dtpT) of Lactococcus lactis subsp. lactis (strain IL1403) (Streptococcus lactis).